The following is a 592-amino-acid chain: Inactive metallocarboxypeptidase ECM14 (592 aa).

The N-terminal stretch at 1-21 (MRQFTHGTLLAILALANTISA) is a signal peptide. Positions 22–174 (IPSFSANNYP…QTVYESYPSS (153 aa)) are excised as a propeptide. Positions 170-179 (SYPSSSQRPT) are enriched in polar residues. The disordered stretch occupies residues 170–191 (SYPSSSQRPTDNGRGFLPSRES). Positions 202 to 521 (DYQPLSVIGP…NAVMVLAKFL (320 aa)) constitute a Peptidase M14 domain. Positions 264 and 267 each coordinate Zn(2+). Substrate is bound by residues 264 to 267 (HARE), Arg-322, and 339 to 340 (DR). Cys-333 and Cys-356 are disulfide-bonded. A glycan (N-linked (GlcNAc...) asparagine) is linked at Asn-349. His-396 contacts Zn(2+). 397–398 (SY) is a substrate binding site. A disordered region spans residues 542–592 (ADKPILDDGDDDEEEDGQDKKDDSWIPDEYKNDNDHDDDDDGWGLRRRRKR). Acidic residues predominate over residues 548–558 (DDGDDDEEEDG). Residues 559 to 575 (QDKKDDSWIPDEYKNDN) show a composition bias toward basic and acidic residues.

Belongs to the peptidase M14 family. It depends on Zn(2+) as a cofactor.

It is found in the vacuole. The protein resides in the secreted. Functionally, inactive carboxypeptidase that may play a role in cell wall organization and biogenesis. In Ajellomyces dermatitidis (strain ER-3 / ATCC MYA-2586) (Blastomyces dermatitidis), this protein is Inactive metallocarboxypeptidase ECM14 (ECM14).